The following is a 695-amino-acid chain: Sodium-dependent phosphate transport protein 2B (695 aa).

The tract at residues 1–44 is disordered; it reads MAPWPELENAHPNPNKFIEGASGPQSSIPDKDKGTSKTNDSGTP. Residues 1–90 are Cytoplasmic-facing; it reads MAPWPELENA…KWSERDSKGK (90 aa). A helical transmembrane segment spans residues 91–111; it reads ILCIFQGIGKFILLLGFLYLF. At 112–136 the chain is on the extracellular side; sequence VCSLDVLSSAFQLVGGKMAGQFFSN. Residues 137–157 form a helical membrane-spanning segment; it reads NSIMSNPVAGLVIGVLVTVMV. Over 158–213 the chain is Cytoplasmic; sequence QSSSTSSSIIVSMVASSLLSVRAAIPIIMGANIGTSITNTIVALMQAGDRNEFRRA. The helical transmembrane segment at 214–234 threads the bilayer; the sequence is FAGATVHDFFNWLSVLVLLPL. Residues 235-363 lie on the Extracellular side of the membrane; sequence EAATHYLEKL…FVNFSLPDLA (129 aa). Residues Asn-295, Asn-313, Asn-321, Asn-340, and Asn-356 are each glycosylated (N-linked (GlcNAc...) asparagine). An intrachain disulfide couples Cys-303 to Cys-350. A helical transmembrane segment spans residues 364 to 384; it reads VGIILLTVSLLILCGCLIMIV. The Cytoplasmic segment spans residues 385–408; the sequence is KLLGSVLRGQVATVIKKTLNTDFP. A helical membrane pass occupies residues 409 to 429; sequence FPFAWLTGYLAILVGAGMTFI. Over 430-486 the chain is Extracellular; it reads VQSSSVFTSAMTPLIGIGVISIERAYPLTLGSNIGTTTTAILAALASPGNTLRSSLQ. The chain crosses the membrane as a helical span at residues 487–507; the sequence is IALCHFFFNISGILLWYPIPF. At 508 to 526 the chain is on the cytoplasmic side; sequence TRLPIRLAKGLGNISAKYR. The helical transmembrane segment at 527 to 547 threads the bilayer; it reads WFAVFYLIFFFLLTPLTVFGL. Over 548 to 551 the chain is Extracellular; that stretch reads SLAG. The chain crosses the membrane as a helical span at residues 552 to 572; that stretch reads WPVLVGVGVPIILLILLVLCL. At 573 to 695 the chain is on the cytoplasmic side; that stretch reads RMLQARCPRI…MKALSNTTVF (123 aa).

It belongs to the SLC34A transporter family. As to expression, highly expressed in the lung, in type II alveolar cells. Moderately expressed in kidney followed by small intestine.

Its subcellular location is the apical cell membrane. It carries out the reaction 3 Na(+)(out) + phosphate(out) = 3 Na(+)(in) + phosphate(in). In terms of biological role, involved in actively transporting phosphate into cells via Na(+) cotransport. In Rattus norvegicus (Rat), this protein is Sodium-dependent phosphate transport protein 2B (Slc34a2).